The chain runs to 86 residues: Cytochrome c-555 (86 aa).

Residues Cys-14, Cys-17, His-18, and Met-60 each coordinate heme c.

Post-translationally, binds 1 heme c group covalently per subunit.

Its function is as follows. This basic c-type monoheme cytochrome has been found exclusively in the green photosynthetic bacteria, although its role in bacterial photosynthesis is not established. It has an unusually low redox potential compared with mitochondrial cytochrome c. It is reactive with cytochrome c oxidases but not with reductases. The protein is Cytochrome c-555 of Chlorobaculum thiosulfatiphilum (Chlorobium limicola f.sp. thiosulfatophilum).